Here is a 271-residue protein sequence, read N- to C-terminus: 3-methyl-2-oxobutanoate hydroxymethyltransferase (271 aa).

Mg(2+)-binding residues include Asp-51 and Asp-90. Residues Asp-51 to Ser-52, Asp-90, and Lys-118 each bind 3-methyl-2-oxobutanoate. Glu-120 is a binding site for Mg(2+). The active-site Proton acceptor is the Glu-186.

The protein belongs to the PanB family. In terms of assembly, homodecamer; pentamer of dimers. Mg(2+) serves as cofactor.

Its subcellular location is the cytoplasm. It catalyses the reaction 3-methyl-2-oxobutanoate + (6R)-5,10-methylene-5,6,7,8-tetrahydrofolate + H2O = 2-dehydropantoate + (6S)-5,6,7,8-tetrahydrofolate. It participates in cofactor biosynthesis; (R)-pantothenate biosynthesis; (R)-pantoate from 3-methyl-2-oxobutanoate: step 1/2. Catalyzes the reversible reaction in which hydroxymethyl group from 5,10-methylenetetrahydrofolate is transferred onto alpha-ketoisovalerate to form ketopantoate. The sequence is that of 3-methyl-2-oxobutanoate hydroxymethyltransferase from Xanthomonas oryzae pv. oryzae (strain PXO99A).